Consider the following 1411-residue polypeptide: Early endosome antigen 1 (1411 aa).

The interval 1-27 (MLRRILQRTPGRVGSQGSDLDSSATPI) is disordered. A compositionally biased stretch (polar residues) spans 15–27 (SQGSDLDSSATPI). Residues 41–64 (FICPQCMKSLGSADELFKHYEAVH) form a C2H2-type zinc finger. Phosphoserine occurs at positions 52 and 70. Residues 74–1348 (GESNLALKRD…IKHTQALNRK (1275 aa)) are a coiled coil. Residues 473 to 501 (VTNSTELQHQLDKTKQQHQEQQALQQSTT) are disordered. The segment covering 481–490 (HQLDKTKQQH) has biased composition (basic and acidic residues). The FYVE-type zinc-finger motif lies at 1352 to 1410 (DNEVQNCMACGKGFSVTVRRHHCRQCGNIFCAECSAKNALTPSSKKPVRVCDACFNDLQ). Zn(2+) contacts are provided by cysteine 1358, cysteine 1361, cysteine 1374, cysteine 1377, cysteine 1382, cysteine 1385, cysteine 1402, and cysteine 1405.

In terms of assembly, homodimer. Binds STX6. Binds RAB5A, RAB5B, RAB5C and RAB22A that have been activated by GTP-binding. Interacts with RAB31. Interacts with ERBB2. Interacts with SAMD9 and SAMD9L. May interact with PLEKHF2.

The protein resides in the cytoplasm. It localises to the early endosome membrane. Binds phospholipid vesicles containing phosphatidylinositol 3-phosphate and participates in endosomal trafficking. In Homo sapiens (Human), this protein is Early endosome antigen 1 (EEA1).